Consider the following 260-residue polypeptide: Small ribosomal subunit protein uS2 (260 aa).

The tract at residues 240 to 260 (VLKPKLPYQPNRRPYQETVKK) is disordered.

Belongs to the universal ribosomal protein uS2 family.

The protein is Small ribosomal subunit protein uS2 of Phytoplasma australiense.